The primary structure comprises 257 residues: Acetylglutamate kinase (257 aa).

Residues 41–42 (GG), arginine 63, and asparagine 158 contribute to the substrate site.

The protein belongs to the acetylglutamate kinase family. ArgB subfamily.

The protein resides in the cytoplasm. The enzyme catalyses N-acetyl-L-glutamate + ATP = N-acetyl-L-glutamyl 5-phosphate + ADP. It participates in amino-acid biosynthesis; L-arginine biosynthesis; N(2)-acetyl-L-ornithine from L-glutamate: step 2/4. Functionally, catalyzes the ATP-dependent phosphorylation of N-acetyl-L-glutamate. This Bacteroides thetaiotaomicron (strain ATCC 29148 / DSM 2079 / JCM 5827 / CCUG 10774 / NCTC 10582 / VPI-5482 / E50) protein is Acetylglutamate kinase.